The primary structure comprises 79 residues: Large ribosomal subunit protein uL24 (79 aa).

This sequence belongs to the universal ribosomal protein uL24 family. Part of the 50S ribosomal subunit.

In terms of biological role, one of two assembly initiator proteins, it binds directly to the 5'-end of the 23S rRNA, where it nucleates assembly of the 50S subunit. Its function is as follows. One of the proteins that surrounds the polypeptide exit tunnel on the outside of the subunit. This chain is Large ribosomal subunit protein uL24, found in Lactobacillus johnsonii (strain CNCM I-12250 / La1 / NCC 533).